Here is a 377-residue protein sequence, read N- to C-terminus: MQTKTVTVKLDKHCYDIIIGPGLVAQAVWQIKHSLHKKDLHQTRFALVTDSNVASLHLDTLQAELTKNKIHTVPIIVEAGEQSKSFLTLQIVIDRILAARLERGDCVIAFGGGVIGDLGGFAASIIRRGMNFIQMPTTLLAQIDSSVGGKTGINSRYGKNLIGAFYQPQCVIADTCFLDTLPLREFRAGYAEIVKYGLISQPDFFEWLEKNWQKIFSNGPTRTEAIVRSCQFKADIVARDEHETGERALLNLGHTFGHMLETATAYDSNRLIHGEAVAIGMVLAHQFSAQLNLINPTLIQRVEAHLKAVGLPTQLKDIPGKLPEAETLMTLIAQDKKVSQNNLTFILTRGLGQSFIAKTVSPEAVLAFLEQKLAEIR.

Residues 113-117 (GVIGD), 137-138 (TT), lysine 150, lysine 159, and 177-180 (FLDT) contribute to the NAD(+) site. The Zn(2+) site is built by glutamate 192, histidine 254, and histidine 273.

Belongs to the sugar phosphate cyclases superfamily. Dehydroquinate synthase family. Requires Co(2+) as cofactor. It depends on Zn(2+) as a cofactor. NAD(+) serves as cofactor.

It is found in the cytoplasm. It carries out the reaction 7-phospho-2-dehydro-3-deoxy-D-arabino-heptonate = 3-dehydroquinate + phosphate. The protein operates within metabolic intermediate biosynthesis; chorismate biosynthesis; chorismate from D-erythrose 4-phosphate and phosphoenolpyruvate: step 2/7. Functionally, catalyzes the conversion of 3-deoxy-D-arabino-heptulosonate 7-phosphate (DAHP) to dehydroquinate (DHQ). The chain is 3-dehydroquinate synthase from Bartonella quintana (strain Toulouse) (Rochalimaea quintana).